A 436-amino-acid polypeptide reads, in one-letter code: Gamma-glutamyl phosphate reductase (436 aa).

Belongs to the gamma-glutamyl phosphate reductase family.

It localises to the cytoplasm. It catalyses the reaction L-glutamate 5-semialdehyde + phosphate + NADP(+) = L-glutamyl 5-phosphate + NADPH + H(+). The protein operates within amino-acid biosynthesis; L-proline biosynthesis; L-glutamate 5-semialdehyde from L-glutamate: step 2/2. Catalyzes the NADPH-dependent reduction of L-glutamate 5-phosphate into L-glutamate 5-semialdehyde and phosphate. The product spontaneously undergoes cyclization to form 1-pyrroline-5-carboxylate. The sequence is that of Gamma-glutamyl phosphate reductase from Prochlorococcus marinus (strain MIT 9312).